Consider the following 196-residue polypeptide: ATP-dependent Clp protease proteolytic subunit (196 aa).

Residue Ser-101 is the Nucleophile of the active site. His-126 is an active-site residue.

Belongs to the peptidase S14 family. As to quaternary structure, component of the chloroplastic Clp protease core complex.

The protein localises to the plastid. The protein resides in the chloroplast stroma. The catalysed reaction is Hydrolysis of proteins to small peptides in the presence of ATP and magnesium. alpha-casein is the usual test substrate. In the absence of ATP, only oligopeptides shorter than five residues are hydrolyzed (such as succinyl-Leu-Tyr-|-NHMec, and Leu-Tyr-Leu-|-Tyr-Trp, in which cleavage of the -Tyr-|-Leu- and -Tyr-|-Trp bonds also occurs).. Its function is as follows. Cleaves peptides in various proteins in a process that requires ATP hydrolysis. Has a chymotrypsin-like activity. Plays a major role in the degradation of misfolded proteins. In Arabis hirsuta (Hairy rock-cress), this protein is ATP-dependent Clp protease proteolytic subunit.